The following is a 346-amino-acid chain: [LysW]-lysine/[LysW]-ornithine hydrolase (346 aa).

Residue His-68 coordinates Zn(2+). The active site involves Asp-70. Residue Asp-92 participates in Zn(2+) binding. Glu-122 acts as the Proton acceptor in catalysis. The Zn(2+) site is built by Glu-123, Glu-146, and His-317.

It belongs to the peptidase M20A family. LysK subfamily. Zn(2+) serves as cofactor. It depends on Co(2+) as a cofactor.

It is found in the cytoplasm. The catalysed reaction is [amino-group carrier protein]-C-terminal-gamma-(L-lysyl)-L-glutamate + H2O = [amino-group carrier protein]-C-terminal-L-glutamate + L-lysine. It catalyses the reaction [amino-group carrier protein]-C-terminal-gamma-(L-ornithyl)-L-glutamate + H2O = [amino-group carrier protein]-C-terminal-L-glutamate + L-ornithine. It functions in the pathway amino-acid biosynthesis; L-lysine biosynthesis via AAA pathway; L-lysine from L-alpha-aminoadipate (Thermus route): step 5/5. The protein operates within amino-acid biosynthesis; L-arginine biosynthesis. Functionally, catalyzes the release of L-lysine from [LysW]-gamma-L-lysine and the release of L-ornithine from [LysW]-L-ornithine. In Saccharolobus solfataricus (strain ATCC 35092 / DSM 1617 / JCM 11322 / P2) (Sulfolobus solfataricus), this protein is [LysW]-lysine/[LysW]-ornithine hydrolase.